Here is a 174-residue protein sequence, read N- to C-terminus: Adipose-secreted signaling protein (174 aa).

Ala-2 is subject to N-acetylalanine. The residue at position 147 (Thr-147) is a Phosphothreonine.

It belongs to the ADISSP family.

Its subcellular location is the secreted. In terms of biological role, adipocyte-secreted protein (adipokine) that acts as a key regulator for white adipose tissue (WAT) thermogenesis and glucose homeostasis at least in part through activation of protein kinase A (PKA). The sequence is that of Adipose-secreted signaling protein from Bos taurus (Bovine).